Here is a 99-residue protein sequence, read N- to C-terminus: UPF0386 protein mll0189 (99 aa).

It belongs to the UPF0386 family.

This chain is UPF0386 protein mll0189, found in Mesorhizobium japonicum (strain LMG 29417 / CECT 9101 / MAFF 303099) (Mesorhizobium loti (strain MAFF 303099)).